A 218-amino-acid polypeptide reads, in one-letter code: Adenylate kinase (218 aa).

10–15 (GAGKGT) contacts ATP. The segment at 30 to 59 (STGDMLRAAVQAQTPVGIEAKKVMDAGKLV) is NMP. AMP-binding positions include T31, R36, 57–59 (KLV), 85–88 (GFPR), and Q92. The LID stretch occupies residues 122-159 (GRRVHLSSGRTYHVRFNPPKKEGLDDLTGEPLVQREDD). Residues R123 and 132 to 133 (TY) contribute to the ATP site. AMP contacts are provided by R156 and R167. G203 serves as a coordination point for ATP.

It belongs to the adenylate kinase family. Monomer.

The protein localises to the cytoplasm. The catalysed reaction is AMP + ATP = 2 ADP. It participates in purine metabolism; AMP biosynthesis via salvage pathway; AMP from ADP: step 1/1. Catalyzes the reversible transfer of the terminal phosphate group between ATP and AMP. Plays an important role in cellular energy homeostasis and in adenine nucleotide metabolism. This is Adenylate kinase from Chlorobium phaeobacteroides (strain DSM 266 / SMG 266 / 2430).